We begin with the raw amino-acid sequence, 323 residues long: Beta-ketoacyl-[acyl-carrier-protein] synthase III (323 aa).

Active-site residues include Cys113 and His250. Residues 251–255 are ACP-binding; that stretch reads QANKR. Asn280 is a catalytic residue.

The protein belongs to the thiolase-like superfamily. FabH family. In terms of assembly, homodimer.

The protein localises to the cytoplasm. It catalyses the reaction malonyl-[ACP] + acetyl-CoA + H(+) = 3-oxobutanoyl-[ACP] + CO2 + CoA. Its pathway is lipid metabolism; fatty acid biosynthesis. Functionally, catalyzes the condensation reaction of fatty acid synthesis by the addition to an acyl acceptor of two carbons from malonyl-ACP. Catalyzes the first condensation reaction which initiates fatty acid synthesis and may therefore play a role in governing the total rate of fatty acid production. Possesses both acetoacetyl-ACP synthase and acetyl transacylase activities. Its substrate specificity determines the biosynthesis of branched-chain and/or straight-chain of fatty acids. This is Beta-ketoacyl-[acyl-carrier-protein] synthase III from Brucella anthropi (strain ATCC 49188 / DSM 6882 / CCUG 24695 / JCM 21032 / LMG 3331 / NBRC 15819 / NCTC 12168 / Alc 37) (Ochrobactrum anthropi).